We begin with the raw amino-acid sequence, 744 residues long: Catalase-peroxidase (744 aa).

Positions 1–21 (MANESKCPFHQTAGGGTSNRD) are disordered. Positions 91-241 (WHSAGTYRIG…LAAVQMGLIY (151 aa)) form a cross-link, tryptophyl-tyrosyl-methioninium (Trp-Tyr) (with M-267). The active-site Proton acceptor is the H92. The tryptophyl-tyrosyl-methioninium (Tyr-Met) (with W-91) cross-link spans 241 to 267 (YVNPEGPEGNPDPVASGKDIRDTFGRM). H282 contributes to the heme b binding site. The segment at 361 to 387 (GAHQWRPKDGKGANTVPDAHDTTKRHA) is disordered.

This sequence belongs to the peroxidase family. Peroxidase/catalase subfamily. Homodimer or homotetramer. Heme b serves as cofactor. Formation of the three residue Trp-Tyr-Met cross-link is important for the catalase, but not the peroxidase activity of the enzyme.

It catalyses the reaction H2O2 + AH2 = A + 2 H2O. The enzyme catalyses 2 H2O2 = O2 + 2 H2O. Bifunctional enzyme with both catalase and broad-spectrum peroxidase activity. The protein is Catalase-peroxidase of Pseudomonas entomophila (strain L48).